Consider the following 306-residue polypeptide: Recombination-associated protein RdgC (306 aa).

The protein belongs to the RdgC family.

It localises to the cytoplasm. The protein localises to the nucleoid. Its function is as follows. May be involved in recombination. The polypeptide is Recombination-associated protein RdgC (Pseudomonas fluorescens (strain SBW25)).